We begin with the raw amino-acid sequence, 148 residues long: Fluoride-specific ion channel FluC 2 (148 aa).

Helical transmembrane passes span 23–43 (LGHL…RLAV), 61–81 (GTLA…TLIF), 92–112 (FWVL…LHTL), and 120–140 (LLGG…ALAG). Positions 99 and 102 each coordinate Na(+).

The protein belongs to the fluoride channel Fluc/FEX (TC 1.A.43) family.

Its subcellular location is the cell membrane. It catalyses the reaction fluoride(in) = fluoride(out). Its activity is regulated as follows. Na(+) is not transported, but it plays an essential structural role and its presence is essential for fluoride channel function. Fluoride-specific ion channel. Important for reducing fluoride concentration in the cell, thus reducing its toxicity. This Rubrobacter xylanophilus (strain DSM 9941 / JCM 11954 / NBRC 16129 / PRD-1) protein is Fluoride-specific ion channel FluC 2.